Reading from the N-terminus, the 245-residue chain is Small ribosomal subunit protein uS2 (245 aa).

This sequence belongs to the universal ribosomal protein uS2 family.

The polypeptide is Small ribosomal subunit protein uS2 (Pseudomonas putida (strain GB-1)).